The primary structure comprises 489 residues: Metalloreductase STEAP2 (489 aa).

NADP(+) contacts are provided by residues 37–40 (SGDF), 59–60 (SR), 92–99 (IHREHYTS), asparagine 117, and alanine 150. FAD contacts are provided by tryptophan 151 and aspartate 159. Residues 207–227 (LFTLWRGPVVVAISLATFFFL) form a helical membrane-spanning segment. Tyrosine 228 provides a ligand contact to Fe(3+). Residues 258-278 (LPIVAITLLSLVYLAGLLAAA) form a helical membrane-spanning segment. Positions 258-406 (LPIVAITLLS…LGYVALLITT (149 aa)) constitute a Ferric oxidoreductase domain. Residues glutamine 280 and arginine 301 each coordinate FAD. Helical transmembrane passes span 304 to 324 (LGLL…CLPM), 358 to 378 (MYIS…VTSI), 392 to 412 (FIQS…VLIY), and 431 to 451 (FVLA…LLLP). Histidine 315 serves as a coordination point for heme b. Tyrosine 318 contacts Fe(3+). 2 residues coordinate FAD: serine 377 and glutamine 394. Residue histidine 408 participates in heme b binding. A Phosphoserine modification is found at serine 482.

It belongs to the STEAP family. FAD serves as cofactor. It depends on heme b as a cofactor.

It is found in the cell membrane. The protein localises to the endosome membrane. The catalysed reaction is 2 Fe(2+) + NADP(+) + H(+) = 2 Fe(3+) + NADPH. The enzyme catalyses 2 Cu(+) + NADP(+) + H(+) = 2 Cu(2+) + NADPH. Integral membrane protein that functions as a NADPH-dependent ferric-chelate reductase, using NADPH from one side of the membrane to reduce a Fe(3+) chelate that is bound on the other side of the membrane. Mediates sequential transmembrane electron transfer from NADPH to FAD and onto heme, and finally to the Fe(3+) chelate. Can also reduce Cu(2+) to Cu(1+). This is Metalloreductase STEAP2 (Steap2) from Mus musculus (Mouse).